The primary structure comprises 332 residues: NAD-dependent protein deacetylase hst2 (332 aa).

The region spanning 7–269 is the Deacetylase sirtuin-type domain; sequence KHVDSSKHLE…RALCKLLGWS (263 aa). NAD(+) is bound by residues 35-55 and 118-121; these read GAGI…TGIY and QNID. H138 (proton acceptor) is an active-site residue. Zn(2+) contacts are provided by C146, C149, C170, and C173. Residues 210–212, 235–237, and C255 contribute to the NAD(+) site; these read GTS and NRE.

The protein belongs to the sirtuin family. Class I subfamily. Zn(2+) serves as cofactor.

It localises to the cytoplasm. Its subcellular location is the nucleus. It catalyses the reaction N(6)-acetyl-L-lysyl-[protein] + NAD(+) + H2O = 2''-O-acetyl-ADP-D-ribose + nicotinamide + L-lysyl-[protein]. NAD-dependent histone deacetylase, which could function in telomeric silencing, cell cycle progression and chromosome stability. The sequence is that of NAD-dependent protein deacetylase hst2 (hst2) from Schizosaccharomyces pombe (strain 972 / ATCC 24843) (Fission yeast).